The following is an 81-amino-acid chain: UPF0180 protein YkuS (81 aa).

This sequence belongs to the UPF0180 family.

This chain is UPF0180 protein YkuS (ykuS), found in Bacillus subtilis (strain 168).